Consider the following 891-residue polypeptide: Alanine--tRNA ligase (891 aa).

The Zn(2+) site is built by histidine 569, histidine 573, cysteine 671, and histidine 675.

The protein belongs to the class-II aminoacyl-tRNA synthetase family. In terms of assembly, homotetramer. Requires Zn(2+) as cofactor.

The protein resides in the cytoplasm. The catalysed reaction is tRNA(Ala) + L-alanine + ATP = L-alanyl-tRNA(Ala) + AMP + diphosphate. Catalyzes the attachment of alanine to tRNA(Ala) in a two-step reaction: alanine is first activated by ATP to form Ala-AMP and then transferred to the acceptor end of tRNA(Ala). Also edits incorrectly charged Ser-tRNA(Ala) and Gly-tRNA(Ala) via its editing domain. The polypeptide is Alanine--tRNA ligase (Blochmanniella floridana).